The primary structure comprises 180 residues: UPF0149 protein XAC3406 (180 aa).

It belongs to the UPF0149 family.

This chain is UPF0149 protein XAC3406, found in Xanthomonas axonopodis pv. citri (strain 306).